A 515-amino-acid polypeptide reads, in one-letter code: Endoglucanase 23 (515 aa).

A signal peptide spans 1-29; sequence MALLSAPVRRRRSRVRVLLVCCCLLLALA. The Nucleophile role is filled by D95. 3 N-linked (GlcNAc...) asparagine glycosylation sites follow: N178, N375, and N384. Residue H426 is part of the active site. A glycan (N-linked (GlcNAc...) asparagine) is linked at N452. Catalysis depends on residues D477 and E486.

It belongs to the glycosyl hydrolase 9 (cellulase E) family.

The protein resides in the secreted. The catalysed reaction is Endohydrolysis of (1-&gt;4)-beta-D-glucosidic linkages in cellulose, lichenin and cereal beta-D-glucans.. The polypeptide is Endoglucanase 23 (GLU12) (Oryza sativa subsp. japonica (Rice)).